The sequence spans 291 residues: Farnesyl diphosphate synthase (291 aa).

Isopentenyl diphosphate-binding residues include Lys44, Arg47, and His76. The Mg(2+) site is built by Asp83 and Asp89. (2E)-geranyl diphosphate is bound at residue Arg94. Arg95 is an isopentenyl diphosphate binding site. Residues Lys177, Thr178, Gln215, and Lys232 each contribute to the (2E)-geranyl diphosphate site.

It belongs to the FPP/GGPP synthase family. Mg(2+) is required as a cofactor.

The protein localises to the cytoplasm. The enzyme catalyses isopentenyl diphosphate + (2E)-geranyl diphosphate = (2E,6E)-farnesyl diphosphate + diphosphate. This is Farnesyl diphosphate synthase (fps) from Micrococcus luteus (Micrococcus lysodeikticus).